The primary structure comprises 326 residues: B3 domain-containing protein At5g60130 (326 aa).

The TF-B3 DNA-binding region spans 12-110 (PKFFKVYLPD…CFHFCIYEHR (99 aa)). The disordered stretch occupies residues 124–222 (EEIKVESDSD…DEDERQYLDD (99 aa)). Over residues 143-199 (LSLDEDDDDSDYNCGEDNDSDDYADEAAVEKDDNDADDEDVDNVADDVPVEDDDYVE) the composition is skewed to acidic residues.

The protein localises to the nucleus. This Arabidopsis thaliana (Mouse-ear cress) protein is B3 domain-containing protein At5g60130.